The following is an 8384-amino-acid chain: Mucin-19 (8384 aa).

Positions 1–21 (MKLILWYLVVALWCFFKDVEA) are cleaved as a signal peptide. 4 disordered regions span residues 33–197 (AASR…YGAG), 222–247 (SKAD…PDAG), 279–305 (GDTG…IDLG), and 332–467 (QEGF…PEAT). Composition is skewed to low complexity over residues 35-48 (SRSG…SSSG) and 88-98 (GGFFNSSSSSG). Basic and acidic residues predominate over residues 169 to 184 (DKSRERWDAGNSRSED). Residues 187–197 (ADSTNTRYGAG) show a composition bias toward polar residues. The span at 279-299 (GDTGISSKTVEGNQTSSSGGS) shows a compositional bias: polar residues. The segment covering 359–369 (GSDSSSSGDSS) has biased composition (low complexity). Over residues 370-381 (ARNGFENSSGIS) the composition is skewed to polar residues. Low complexity-rich tracts occupy residues 424 to 435 (SDSGGNTWSSDS) and 443 to 452 (TSSSEYSTSG). VWFD domains lie at 478–649 (GEIS…QHCN), 815–995 (GRCK…SSCI), and 1274–1447 (TICH…QECS). Intrachain disulfides connect Cys502–Cys648, Cys817–Cys952, Cys838–Cys994, Cys857–Cys865, Cys1276–Cys1411, Cys1298–Cys1446, Cys1307–Cys1408, and Cys1323–Cys1330. Disordered regions lie at residues 1680–1699 (TSSS…PFTT), 1732–2464 (AGTT…KSPG), 2484–2526 (LESE…TEGS), 2540–2827 (RPLD…MTGT), 2850–2917 (STVG…LGTI), 2984–3027 (VTTG…SGTT), 3075–3368 (GTTG…GKTG), 3386–3428 (TTRL…GKTG), 3585–3628 (ETTG…TNGL), 3667–3736 (GSSA…TGLP), 4105–4147 (TGSS…NGLS), 4187–4251 (SAGV…AEVT), 4315–4390 (GLSA…SARV), 4414–4455 (TGSS…TNGQ), 4510–4583 (TGTT…TGLP), 4790–4843 (TGTT…TGLP), 4895–4930 (SSAG…AGVT), 5130–5161 (TGTT…GVTG), 5429–5452 (VTGT…VTGK), 5464–5494 (GPSA…GTTG), 5880–5918 (GTSI…SAEM), 6069–6403 (TGKT…STES), 6440–6918 (GRAT…ETTK), 6953–7223 (GTSE…TGFK), 7250–7749 (SFST…SKTG), 7783–7975 (KNGS…EAGS), and 8020–8133 (SGRS…VSQP). Low complexity-rich tracts occupy residues 1732 to 1746 (AGTT…TGAA), 1772 to 1813 (PGEA…TTGP), and 1820 to 1833 (GATS…EGMS). Polar residues predominate over residues 1835–1860 (VTGQSLGSTAGSDSEITAKTSFTGSS). The span at 1868–1879 (PSPGSPGHFSGG) shows a compositional bias: low complexity. A compositionally biased stretch (polar residues) spans 1880 to 1905 (TTEWGNVATTGAAGENTSGALGSTEG). Over residues 1909 to 1921 (ATTSAGSGNTAGT) the composition is skewed to low complexity. Polar residues predominate over residues 1950 to 1968 (GSSTPGEADIGNTSFGKSG). Low complexity-rich tracts occupy residues 1969–1983 (TPTV…SPVS) and 2013–2049 (GGKI…SGPS). Residues 2055–2100 (NYGQSSEIPGTIKSSSDVSGTMGQSDTTSGPSVAVTRTSEQSSGVT) show a composition bias toward polar residues. Low complexity-rich tracts occupy residues 2132-2147 (TTGS…GPSS) and 2159-2170 (GSGTSGQSVTGS). Composition is skewed to polar residues over residues 2171 to 2186 (RATG…TVSF) and 2209 to 2225 (GSGT…TTRL). 2 stretches are compositionally biased toward low complexity: residues 2233 to 2246 (TESS…TTPS) and 2280 to 2313 (SGPS…TKPS). Residues 2238-6086 (GVTGTTTPSA…GVTGTTGLSA (3849 aa)) are approximate repeats of G-V-T-G-T-T-G-P-S-A. 2 stretches are compositionally biased toward polar residues: residues 2316-2332 (RTGT…TTEP) and 2354-2372 (ATES…TTIP). Positions 2403-2419 (SSGGSGATRSSGGGMGT) are enriched in gly residues. Residues 2420 to 2441 (TGQSTARSETTGPLFGLTGTFG) show a composition bias toward low complexity. Polar residues predominate over residues 2442–2460 (QSATVTGTSSNSAGVTTPE). Low complexity-rich tracts occupy residues 2512–2526 (SAGE…TEGS), 2545–2571 (GSGT…TTRK), and 2578–2589 (TTGLSGLTGTSG). 2 stretches are compositionally biased toward polar residues: residues 2595 to 2610 (TGTS…TSEK) and 2638 to 2653 (TRPS…QSAR). Over residues 2654 to 2681 (VTETVGASAGVTGTTGPSTEGSGATGPS) the composition is skewed to low complexity. Polar residues-rich tracts occupy residues 2695–2748 (SGTT…TGTT) and 2755–2770 (TETT…TTGP). Positions 2787-2799 (ATRSSGGETETTG) are enriched in low complexity. Polar residues-rich tracts occupy residues 2800-2827 (QSAV…MTGT), 2850-2859 (STVGLETTRP), and 2874-2892 (AQTT…QSAR). Positions 2894 to 2910 (TGASGPSVGVTGTTGPA) are enriched in low complexity. A compositionally biased stretch (polar residues) spans 2984–2998 (VTTGPSVTGVETTAK). A compositionally biased stretch (low complexity) spans 2999-3027 (TTSGGLSTTISSVGGTGTTGQSPERSGTT). The segment covering 3099–3109 (PSITGSGTTRP) has biased composition (polar residues). Low complexity predominate over residues 3114 to 3130 (SWTAGTSSGGHSTTSPS). Over residues 3131-3159 (VRGTETTGQSAAESVTTGPVTGYTETSGP) the composition is skewed to polar residues. Residues 3172 to 3188 (TVTQTTGSSAAVSGTTV) are compositionally biased toward low complexity. Polar residues predominate over residues 3189-3224 (QSLTVSGTTRPSSGQTEITGSSVKESGTTESSAVRS). The span at 3225-3277 (GTTGPTAGVTGTNGPSSAGVTGITGSSPGVTGTTGSSPGVTGTTGSSARSGTS) shows a compositional bias: low complexity. Composition is skewed to polar residues over residues 3303-3317 (ITGT…TGTT) and 3324-3362 (TGTT…SSAG). Low complexity predominate over residues 3390–3417 (SAGVTGTTGPSPGVTGTTGTPAGVTGTT). Composition is skewed to polar residues over residues 3702–3728 (VTGT…TTGP) and 4105–4116 (TGSSARSGTSIP). Low complexity predominate over residues 4117–4126 (SVGETGTTRT). Residues 4320–4346 (VTGTTRPSAGVTGTTGQSAEVTGTTEP) are compositionally biased toward polar residues. Composition is skewed to low complexity over residues 4347 to 4385 (SAGL…GTTG) and 4414 to 4426 (TGSS…STPS). Low complexity-rich tracts occupy residues 5469 to 5494 (VTGT…GTTG) and 5889 to 5903 (TGTT…TTTG). Polar residues-rich tracts occupy residues 5908-5918 (ITGTNGLSAEM), 6071-6103 (KTRS…TTKT), and 6111-6121 (TRPSAGITATT). Residues 6156 to 6168 (TTTGTTGVTTGTT) show a composition bias toward low complexity. Polar residues-rich tracts occupy residues 6217–6248 (EVST…TATT) and 6257–6275 (APGS…SAST). Positions 6284 to 6295 (TGSTRGVRTTGS) are enriched in low complexity. Polar residues-rich tracts occupy residues 6303-6323 (GEFS…TTLT) and 6336-6346 (ESTTSLPQSAK). A compositionally biased stretch (low complexity) spans 6378–6389 (SGTTISSGGSHT). 2 stretches are compositionally biased toward polar residues: residues 6440-6457 (GRAT…TSQA) and 6470-6503 (TTIT…TTYI). Positions 6507–6523 (GTTRGGLATATTGAFSG) are enriched in low complexity. Over residues 6560 to 6571 (TTFTSGGSHTEA) the composition is skewed to polar residues. Residues 6581–6597 (TGTESRAATTRAAPGTT) are compositionally biased toward low complexity. The span at 6599–6608 (VPGSSNTGAT) shows a compositional bias: polar residues. The span at 6612–6628 (GGSATTRGRITTATTGA) shows a compositional bias: low complexity. Composition is skewed to polar residues over residues 6669 to 6680 (RITSGGSYTATT) and 6689 to 6698 (APGSSNTGAT). Residues 6707–6718 (TRGRITTATTGA) show a composition bias toward low complexity. A compositionally biased stretch (polar residues) spans 6752-6766 (TTLTGDRSSTGSESR). The span at 6767–6781 (TATTGVAPGTTVAPG) shows a compositional bias: low complexity. Over residues 6794–6817 (SGTTNIGRATGATTSIVGSDTSQA) the composition is skewed to polar residues. The span at 6827-6842 (SPGASSTSQSSRPGTS) shows a compositional bias: low complexity. Residues 6843–6875 (VTPDSSASESETVTTKEFSGTTAISRTSHTGTP) are compositionally biased toward polar residues. Low complexity predominate over residues 6887–6901 (TATTGVAPGTTVAPG). Polar residues-rich tracts occupy residues 6902–6911 (SSNTEATTSV) and 6953–6964 (GTSEVAPSTTVA). The span at 6966–6994 (GSFSTAATTSPGASGTTGVTTTTKTTTSL) shows a compositional bias: low complexity. Positions 7006 to 7041 (SATTGAPGSRTGTAGVPSATTVSPGSSNSEATTSVG) are enriched in polar residues. The segment covering 7045 to 7074 (KTGAETITEATTSTEGTGTSGTGFKTGTSE) has biased composition (low complexity). Residues 7085–7094 (SFSTAATTSP) show a composition bias toward polar residues. The span at 7095–7112 (GASGMTGVTTTTKTTTSL) shows a compositional bias: low complexity. A compositionally biased stretch (polar residues) spans 7143–7158 (TRVTPGSSNSEATTSV). Low complexity-rich tracts occupy residues 7201-7215 (SGSS…TEGT) and 7250-7276 (SFST…TTSL). Over residues 7293 to 7311 (SGTTVAPGSSNSEATTSVG) the composition is skewed to polar residues. The span at 7379–7397 (TTSTKGTGTSGTGFKTGTS) shows a compositional bias: low complexity. Residues 7403–7421 (TTVSPGSFSTATISPGASR) show a composition bias toward polar residues. Low complexity predominate over residues 7422 to 7435 (TTGAAPAAETTTSL). Polar residues predominate over residues 7465–7483 (SATTIAPGSSNSEATTSLG). Residues 7525-7537 (PLGGASGTSGGYV) are compositionally biased toward gly residues. 2 stretches are compositionally biased toward polar residues: residues 7544–7557 (PTTS…SRTI) and 7571–7596 (AGTS…TSPG). The span at 7600–7613 (MTGVRTTSKTTTSL) shows a compositional bias: low complexity. 2 stretches are compositionally biased toward polar residues: residues 7642–7669 (SSRT…SGTG) and 7698–7708 (SFSTAATTSPG). The span at 7715 to 7732 (TGPTAETTTFLGGSSTTG) shows a compositional bias: low complexity. Positions 7783–7811 (KNGSMTTALGSQLSSSQTVIPGSSGTISH) are enriched in polar residues. Positions 7812–7828 (TTVAPGSSVTGTTTGAS) are enriched in low complexity. A compositionally biased stretch (polar residues) spans 7830-7851 (DQVTGSKTGTTGVALSTTVAPG). Residues 7852–7861 (SSSTEATTST) show a composition bias toward low complexity. The span at 7862–7891 (GVHRTTVVGQKTGATTRGSAKQGTRSTIEA) shows a compositional bias: polar residues. The segment covering 7892–7917 (TTSFRGTGTTGSGMNTGTTGVVSGNT) has biased composition (low complexity). Polar residues predominate over residues 7918–7934 (ISPSSFNTEATSGTSER). The span at 7938 to 7952 (GSEIGTTGIVSGTTV) shows a compositional bias: low complexity. Polar residues-rich tracts occupy residues 7953–7965 (APGS…TTSL), 8020–8040 (SGRS…SGTT), 8048–8081 (TGNT…SISG), and 8110–8120 (ETGVQTGSTLV). Residues 8159 to 8225 (PVCHGPLGEE…DTCCEIGYCE (67 aa)) enclose the VWFC domain. Disulfide bonds link Cys8288–Cys8339, Cys8306–Cys8353, Cys8315–Cys8369, and Cys8319–Cys8371. A CTCK domain is found at 8288–8376 (CKNNCRSSLV…TTCSCLDICQ (89 aa)).

As to expression, expressed corneal epithelial cells, conjunctival goblet and epithelial cells and lacrimal gland cells (at protein level). Expressed by mucous cells of the submandibular gland and submucosal gland of the trachea. Expressed by middle ear epithelial cells.

The protein resides in the secreted. Functionally, may function in ocular mucus homeostasis. The sequence is that of Mucin-19 (MUC19) from Homo sapiens (Human).